A 364-amino-acid polypeptide reads, in one-letter code: Developmentally-regulated GTP-binding protein 2 (364 aa).

Lysine 21 is subject to (3S)-3-hydroxylysine. The 226-residue stretch at 63–288 folds into the OBG-type G domain; the sequence is ARVALIGFPS…LLEMLWEYLA (226 aa). GTP contacts are provided by residues 69-76, 94-98, 115-118, 246-249, and 269-271; these read GFPSVGKS, FTTLT, DLPG, NKID, and SCG. Mg(2+) is bound by residues serine 76 and threonine 96. The TGS domain occupies 288-363; the sequence is ALTCIYTKKR…EHEDVIQIVK (76 aa).

The protein belongs to the TRAFAC class OBG-HflX-like GTPase superfamily. OBG GTPase family. In terms of assembly, interacts with RWDD1; this interaction confers protection to polyubiquitination and proteolytic degradation. Interacts with JMJD7; this interaction is direct. Requires Mg(2+) as cofactor. Post-translationally, polyubiquitinated. In terms of processing, hydroxylated (with S stereochemistry) at C-3 of Lys-21 by JMJD7. As to expression, fairly high levels in liver, heart, kidney, and brain. Very low levels in lung, spleen, testis and skeletal muscle.

It is found in the nucleus. The protein localises to the cytoplasm. The catalysed reaction is GTP + H2O = GDP + phosphate + H(+). In terms of biological role, catalyzes the conversion of GTP to GDP through hydrolysis of the gamma-phosphate bond in GTP. When hydroxylated at C-3 of 'Lys-21' by JMJD7, may bind to RNA and play a role in translation. This Mus musculus (Mouse) protein is Developmentally-regulated GTP-binding protein 2 (Drg2).